The sequence spans 364 residues: Alanine racemase (364 aa).

Lys34 serves as the catalytic Proton acceptor; specific for D-alanine. Lys34 is subject to N6-(pyridoxal phosphate)lysine. Arg129 is a substrate binding site. Tyr259 acts as the Proton acceptor; specific for L-alanine in catalysis. Met307 is a binding site for substrate.

Belongs to the alanine racemase family. Pyridoxal 5'-phosphate is required as a cofactor.

The catalysed reaction is L-alanine = D-alanine. It functions in the pathway amino-acid biosynthesis; D-alanine biosynthesis; D-alanine from L-alanine: step 1/1. Functionally, catalyzes the interconversion of L-alanine and D-alanine. May also act on other amino acids. The protein is Alanine racemase (alr) of Coxiella burnetii (strain RSA 493 / Nine Mile phase I).